A 388-amino-acid chain; its full sequence is Calreticulin (388 aa).

Positions 1–17 (MQLSLLVGLVCFSAINA) are cleaved as a signal peptide. An intrachain disulfide couples cysteine 103 to cysteine 135. Positions 107, 109, 126, and 133 each coordinate an alpha-D-glucoside. 7 repeat units span residues 189–200 (AESGELEADWDF), 208–219 (DPDAKKPEDWDE), 225–236 (DEDDKKPEDWDK), 242–253 (DPDAKKPEDWDD), 257–267 (GEWEPPMVDNP), 271–281 (GEWKPKQKKNP), and 285–295 (GKWIHPEIEIP). The tract at residues 189–253 (AESGELEADW…DAKKPEDWDD (65 aa)) is 4 X approximate repeats. The interval 193–282 (ELEADWDFLP…WKPKQKKNPA (90 aa)) is disordered. Basic and acidic residues predominate over residues 205–215 (KIKDPDAKKPE). The span at 216-227 (DWDEREFIDDED) shows a compositional bias: acidic residues. Over residues 228–249 (DKKPEDWDKPEHIPDPDAKKPE) the composition is skewed to basic and acidic residues. The segment covering 250–259 (DWDDEMDGEW) has biased composition (acidic residues). Residues 257-295 (GEWEPPMVDNPEYKGEWKPKQKKNPAYKGKWIHPEIEIP) form a 3 X approximate repeats region. Residue aspartate 315 participates in an alpha-D-glucoside binding. The segment at 349-388 (REGEKKKGKKTKKQKKKEKNEKIKKEKMKKRKRANRKKKK) is disordered. Composition is skewed to basic residues over residues 354-365 (KKGKKTKKQKKK) and 373-388 (KEKM…KKKK).

Belongs to the calreticulin family.

The protein resides in the endoplasmic reticulum lumen. In terms of biological role, molecular calcium-binding chaperone promoting folding, oligomeric assembly and quality control in the ER via the calreticulin/calnexin cycle. This lectin may interact transiently with almost all of the monoglucosylated glycoproteins that are synthesized in the ER. The protein is Calreticulin (crt-1) of Onchocerca volvulus.